The chain runs to 500 residues: Probable zinc metalloprotease MGYG_02393 (500 aa).

Residues 1-24 form the signal peptide; the sequence is MHLSMGGLLPGLALLASANALALA. 3 N-linked (GlcNAc...) asparagine glycosylation sites follow: Asn-61, Asn-103, and Asn-124. The Zn(2+) site is built by His-174, Asp-194, and Glu-230. Asn-245 carries an N-linked (GlcNAc...) asparagine glycan. Asp-257 lines the Zn(2+) pocket. The region spanning 414-500 is the Fibronectin type-III domain; that stretch reads MPRNVRVNTS…ERGVAVLPFP (87 aa). 2 N-linked (GlcNAc...) asparagine glycosylation sites follow: Asn-421 and Asn-427.

Belongs to the peptidase M28 family. M28B subfamily. The cofactor is Zn(2+).

It localises to the secreted. The chain is Probable zinc metalloprotease MGYG_02393 from Arthroderma gypseum (strain ATCC MYA-4604 / CBS 118893) (Microsporum gypseum).